We begin with the raw amino-acid sequence, 447 residues long: Oxysterols receptor LXR-alpha (447 aa).

The interval 1-88 (MSLWLEAPVP…LRPQKRKKGP (88 aa)) is disordered. The interval 1-96 (MSLWLEAPVP…GPAPKMLGNE (96 aa)) is transactivation AF-1; required for ligand-independent transactivation function. The nuclear receptor DNA-binding region spans 95-170 (NELCSVCGDK…AGMREECVLS (76 aa)). NR C4-type zinc fingers lie at residues 98–118 (CSVC…CEGC) and 134–158 (CHSG…LRKC). The segment at 178 to 203 (KMKRQEEEQAQATSAPPRASSPPQVL) is disordered. Over residues 187-203 (AQATSAPPRASSPPQVL) the composition is skewed to low complexity. The interval 205 to 447 (QLSPEQLGMI…LLSEIWDVHE (243 aa)) is transactivation AF-2; required for ligand-dependent transactivation function; mediates interaction with CCAR2. The NR LBD domain maps to 209–447 (EQLGMIEKLV…LLSEIWDVHE (239 aa)).

It belongs to the nuclear hormone receptor family. NR1 subfamily. In terms of assembly, heterodimer of NR1H3 and RXR (retinoic acid receptor). Interacts with CCAR2 (via N-terminus) in a ligand-independent manner. Interacts with SIRT1 and this interaction is inhibited by CCAR2. Post-translationally, ubiquitinated by UBR5, leading to its degradation: UBR5 specifically recognizes and binds ligand-bound NR1H3 when it is not associated with coactivators (NCOAs). In presence of NCOAs, the UBR5-degron is not accessible, preventing its ubiquitination and degradation.

The protein localises to the nucleus. It localises to the cytoplasm. Nuclear receptor that exhibits a ligand-dependent transcriptional activation activity. Interaction with retinoic acid receptor (RXR) shifts RXR from its role as a silent DNA-binding partner to an active ligand-binding subunit in mediating retinoid responses through target genes defined by LXRES. LXRES are DR4-type response elements characterized by direct repeats of two similar hexanuclotide half-sites spaced by four nucleotides. Plays an important role in the regulation of cholesterol homeostasis, regulating cholesterol uptake through MYLIP-dependent ubiquitination of LDLR, VLDLR and LRP8. Interplays functionally with RORA for the regulation of genes involved in liver metabolism. Induces LPCAT3-dependent phospholipid remodeling in endoplasmic reticulum (ER) membranes of hepatocytes, driving SREBF1 processing and lipogenesis. Via LPCAT3, triggers the incorporation of arachidonate into phosphatidylcholines of ER membranes, increasing membrane dynamics and enabling triacylglycerols transfer to nascent very low-density lipoprotein (VLDL) particles. Via LPCAT3 also counteracts lipid-induced ER stress response and inflammation, likely by modulating SRC kinase membrane compartmentalization and limiting the synthesis of lipid inflammatory mediators. The chain is Oxysterols receptor LXR-alpha (NR1H3) from Bos taurus (Bovine).